We begin with the raw amino-acid sequence, 151 residues long: Flagellar assembly factor FliW (151 aa).

This sequence belongs to the FliW family. In terms of assembly, interacts with translational regulator CsrA and flagellin(s).

The protein localises to the cytoplasm. Functionally, acts as an anti-CsrA protein, binds CsrA and prevents it from repressing translation of its target genes, one of which is flagellin. Binds to flagellin and participates in the assembly of the flagellum. This is Flagellar assembly factor FliW from Natranaerobius thermophilus (strain ATCC BAA-1301 / DSM 18059 / JW/NM-WN-LF).